The following is a 329-amino-acid chain: Pantothenate kinase (329 aa).

107–114 (GSVAVGKS) contacts ATP.

The protein belongs to the prokaryotic pantothenate kinase family.

The protein localises to the cytoplasm. The enzyme catalyses (R)-pantothenate + ATP = (R)-4'-phosphopantothenate + ADP + H(+). It functions in the pathway cofactor biosynthesis; coenzyme A biosynthesis; CoA from (R)-pantothenate: step 1/5. This chain is Pantothenate kinase, found in Streptomyces avermitilis (strain ATCC 31267 / DSM 46492 / JCM 5070 / NBRC 14893 / NCIMB 12804 / NRRL 8165 / MA-4680).